We begin with the raw amino-acid sequence, 66 residues long: Large ribosomal subunit protein bL33c (66 aa).

Belongs to the bacterial ribosomal protein bL33 family.

The protein resides in the plastid. It localises to the chloroplast. The polypeptide is Large ribosomal subunit protein bL33c (Physcomitrium patens (Spreading-leaved earth moss)).